Reading from the N-terminus, the 35-residue chain is Natriuretic peptide TNPb (35 aa).

A disulfide bridge links cysteine 9 with cysteine 25.

Expressed by the venom gland.

It is found in the secreted. In terms of biological role, snake venom natriuretic peptide that exhibits vasoactive and probable hypotensive activity. Is only weakly active on natriuretic peptide receptor-C (NPR3). Stimulates cGMP production through the natriuretic peptide receptor 1 (NPR1) with moderate potencies for the rat NPR1 (EC(50)=1200 nM), and very weak potencies over human NPR1 (30% activation at 10 uM). In vivo, does not impact systolic and diastolic blood pressure, as well as heart rate, when intravenously injected in conscious rabbits. Does not affect the bradycardia due to cardiac afferent stimulation (Bezold-Jarisch reflex). This chain is Natriuretic peptide TNPb, found in Oxyuranus microlepidotus (Inland taipan).